The sequence spans 61 residues: Conotoxin Vn5.3 (61 aa).

The signal sequence occupies residues M1–G19. Residues V20–R50 constitute a propeptide that is removed on maturation.

It belongs to the conotoxin T superfamily. Post-translationally, contains 2 disulfide bonds that can be either 'C1-C3, C2-C4' or 'C1-C4, C2-C3', since these disulfide connectivities have been observed for conotoxins with cysteine framework V (for examples, see AC P0DQQ7 and AC P81755). In terms of tissue distribution, expressed by the venom duct.

It is found in the secreted. This is Conotoxin Vn5.3 from Conus ventricosus (Mediterranean cone).